Reading from the N-terminus, the 356-residue chain is DNA polymerase IV (356 aa).

The UmuC domain maps to 7 to 188 (IIHIDMDCFY…LPLKKIPGVG (182 aa)). Mg(2+) contacts are provided by Asp-11 and Asp-106. Glu-107 is a catalytic residue.

It belongs to the DNA polymerase type-Y family. As to quaternary structure, monomer. The cofactor is Mg(2+).

The protein resides in the cytoplasm. The catalysed reaction is DNA(n) + a 2'-deoxyribonucleoside 5'-triphosphate = DNA(n+1) + diphosphate. Poorly processive, error-prone DNA polymerase involved in untargeted mutagenesis. Copies undamaged DNA at stalled replication forks, which arise in vivo from mismatched or misaligned primer ends. These misaligned primers can be extended by PolIV. Exhibits no 3'-5' exonuclease (proofreading) activity. May be involved in translesional synthesis, in conjunction with the beta clamp from PolIII. This is DNA polymerase IV from Actinobacillus pleuropneumoniae serotype 3 (strain JL03).